The following is a 170-amino-acid chain: Myelin-associated oligodendrocyte basic protein (170 aa).

The tract at residues 69-170 (SRRATSPQKP…GSPTRAPRFW (102 aa)) is disordered. Over residues 82-92 (PAASPVVVRAP) the composition is skewed to low complexity. Phosphoserine occurs at positions 85, 98, and 107. Repeat 1 spans residues 93–101 (PAKPKSPPR). The span at 93–114 (PAKPKSPPRPAKPRSPPIPAKP) shows a compositional bias: pro residues. The interval 93–119 (PAKPKSPPRPAKPRSPPIPAKPRSPSR) is 3 X 9 AA approximate tandem repeats. The 2; half-length repeat unit spans residues 105-110 (PRSPPI). Repeat 3 spans residues 111 to 119 (PAKPRSPSR). Basic and acidic residues predominate over residues 118 to 130 (SRTERQPRPRPEV). Positions 138–151 (KPPQKSKQPARSSP) are enriched in low complexity.

Expressed predominantly in oligodendrocytes, in CNS myelin of the cerebrum and spinal cord. No expression seen in sciatic nerve.

Its subcellular location is the cytoplasm. It localises to the perinuclear region. In terms of biological role, may play a role in compacting or stabilizing the myelin sheath, possibly by binding the negatively charged acidic phospholipids of the cytoplasmic membrane. In Rattus norvegicus (Rat), this protein is Myelin-associated oligodendrocyte basic protein (Mobp).